The sequence spans 163 residues: Peptidyl-prolyl cis-trans isomerase NIMA-interacting 1 (163 aa).

One can recognise a WW domain in the interval 5–39 (EKLPPGWEKRMSRSSGRVYYFNHITNASQWERPSG). Positions 33–54 (QWERPSGNSSSGGKNGQGEPAR) are disordered. Position 43 is a phosphoserine (Ser43). N6-acetyllysine is present on Lys46. A PpiC domain is found at 52–163 (PARVRCSHLL…SGIHIILRTE (112 aa)). A Phosphoserine; by DAPK1 modification is found at Ser71. At Ser108 the chain carries Phosphoserine.

In terms of assembly, interacts with STIL. Interacts with KIF20B. Interacts with NEK6. Interacts (via WW domain) with PRKX. Interacts with BTK. Interacts (via PpiC domain) with DAPK1. Interacts with the phosphorylated form of RAF1. Interacts (via WW domain) with ATCAY; upon NGF stimulation. Interacts with PML (isoform PML-4). Interacts with BCL6. Interacts with FBXW7, disrupting FBXW7 dimerization and promoting FBXW7 autoubiquitination and degradation. Directly interacts with RBBP8/CtIP; this interaction depends upon RBBP8 phosphorylation. Interacts (via WW domain) with IRAK3/IRAK-M (when phosphorylated at 'Ser-110') in response to IL33-mediated (but not TLR4 ligand LPS) dendritic cell stimulation. Interacts with PGK1 (when phosphorylated at 'Ser-203'); the interaction is direct, occurs under hypoxic conditions, and targets PGK1 to the mitochondrion by promoting interactions with the TOM complex. Post-translationally, phosphorylation at Ser-71 by DAPK1 results in inhibition of its catalytic activity, nuclear localization, and its ability to induce centrosome amplification, chromosome instability and cell transformation. Ser-71 is dephosphorylated upon IL33-stimulation of dendritic cells. In terms of tissue distribution, expressed in immune cells in the lung (at protein level). The phosphorylated form at Ser-71 is expressed in normal breast tissue cells but not in breast cancer cells.

Its subcellular location is the nucleus. It is found in the nucleus speckle. The protein localises to the cytoplasm. It carries out the reaction [protein]-peptidylproline (omega=180) = [protein]-peptidylproline (omega=0). In terms of biological role, peptidyl-prolyl cis/trans isomerase (PPIase) that binds to and isomerizes specific phosphorylated Ser/Thr-Pro (pSer/Thr-Pro) motifs. By inducing conformational changes in a subset of phosphorylated proteins, acts as a molecular switch in multiple cellular processes. Displays a preference for acidic residues located N-terminally to the proline bond to be isomerized. Regulates mitosis presumably by interacting with NIMA and attenuating its mitosis-promoting activity. Down-regulates kinase activity of BTK. Can transactivate multiple oncogenes and induce centrosome amplification, chromosome instability and cell transformation. Required for the efficient dephosphorylation and recycling of RAF1 after mitogen activation. Binds and targets PML and BCL6 for degradation in a phosphorylation-dependent manner. Acts as a regulator of JNK cascade by binding to phosphorylated FBXW7, disrupting FBXW7 dimerization and promoting FBXW7 autoubiquitination and degradation: degradation of FBXW7 leads to subsequent stabilization of JUN. May facilitate the ubiquitination and proteasomal degradation of RBBP8/CtIP through CUL3/KLHL15 E3 ubiquitin-protein ligase complex, hence favors DNA double-strand repair through error-prone non-homologous end joining (NHEJ) over error-free, RBBP8-mediated homologous recombination (HR). Upon IL33-induced lung inflammation, catalyzes cis-trans isomerization of phosphorylated IRAK3/IRAK-M, inducing IRAK3 stabilization, nuclear translocation and expression of pro-inflammatory genes in dendritic cells. Catalyzes cis-trans isomerization of phosphorylated phosphoglycerate kinase PGK1 under hypoxic conditions to promote its binding to the TOM complex and targeting to the mitochondrion. This is Peptidyl-prolyl cis-trans isomerase NIMA-interacting 1 (PIN1) from Homo sapiens (Human).